The primary structure comprises 1063 residues: Exportin-T (1063 aa).

The protein belongs to the exportin family.

It localises to the nucleus. It is found in the cytoplasm. TRNA nucleus export receptor which facilitates tRNA translocation across the nuclear pore complex. Involved in pre-tRNA splicing, probably by affecting the interaction of pre-tRNA with splicing endonuclease. The sequence is that of Exportin-T (LOS1) from Kluyveromyces lactis (strain ATCC 8585 / CBS 2359 / DSM 70799 / NBRC 1267 / NRRL Y-1140 / WM37) (Yeast).